Consider the following 729-residue polypeptide: Neurochondrin (729 aa).

Ser-2 bears the N-acetylserine mark. Position 2 is a phosphoserine (Ser-2). S-palmitoyl cysteine attachment occurs at residues Cys-3 and Cys-4. Arg-75 bears the Asymmetric dimethylarginine mark. The residue at position 448 (Ser-448) is a Phosphoserine.

The protein belongs to the neurochondrin family. In terms of assembly, interacts with MCHR1. Interacts with SEMA4C. Interacts with DIAPH1 (via FH3 domain). Interacts with GRM5. In terms of processing, palmitoylated. Palmitoylation by ZDHHC1, ZDHHC3 and ZDHHC11 regulates the association of NCDN with endosome membranes. May also be palmitoylated by ZDHHC7. Expressed in the neuronal, chondral and bone tissues. Expressed in dendrites. Enriched in the brain in the surface layer I-IV. In brains, protein level increases in male but decreases in female with advancing age (at protein level). In adult brains, it is highly expressed in the forebrain and hindbrain. Highly expressed in the hippocampus, piriform cortex, septum, amygdaloid complex, medial geniculate nucleus, inferior colliculus, cerebellar nuclei and the nuclei of the Vth, VIIth, and XIIth cranial nerves. In bone tissues, it is expressed in osteoblasts and osteocytes.

The protein localises to the cytoplasm. It localises to the cytosol. It is found in the endosome membrane. The protein resides in the cell projection. Its subcellular location is the dendrite. The protein localises to the postsynapse. Its function is as follows. Probably involved in signal transduction, in the nervous system, via increasing cell surface localization of GRM5 and positively regulating its signaling. Required for the spatial learning process. Acts as a negative regulator of Ca(2+)-calmodulin-dependent protein kinase 2 (CaMK2) phosphorylation. May play a role in modulating melanin-concentrating hormone-mediated functions via its interaction with MCHR1 that interferes with G protein-coupled signal transduction. May be involved in bone metabolism. May also be involved in neurite outgrowth. The protein is Neurochondrin (Ncdn) of Mus musculus (Mouse).